The following is a 163-amino-acid chain: Protein-export protein SecB (163 aa).

It belongs to the SecB family. In terms of assembly, homotetramer, a dimer of dimers. One homotetramer interacts with 1 SecA dimer.

The protein resides in the cytoplasm. Functionally, one of the proteins required for the normal export of preproteins out of the cell cytoplasm. It is a molecular chaperone that binds to a subset of precursor proteins, maintaining them in a translocation-competent state. It also specifically binds to its receptor SecA. This chain is Protein-export protein SecB, found in Methylibium petroleiphilum (strain ATCC BAA-1232 / LMG 22953 / PM1).